A 379-amino-acid chain; its full sequence is Sporozoite surface protein P36 (379 aa).

The signal sequence occupies residues 1 to 33 (MAYNIWEEYIMANFHNVYPVVTNLFLFIALSYS). 6-Cys domains lie at 69–206 (FVFF…VKAN) and 215–379 (FIKG…TVES). Disulfide bonds link Cys91–Cys101, Cys115–Cys186, and Cys129–Cys184. 2 N-linked (GlcNAc...) asparagine glycosylation sites follow: Asn98 and Asn118. The N-linked (GlcNAc...) asparagine glycan is linked to Asn206. 3 disulfide bridges follow: Cys219/Cys243, Cys257/Cys360, and Cys295/Cys358. Residues Asn298 and Asn374 are each glycosylated (N-linked (GlcNAc...) asparagine).

It is found in the cell surface. The protein resides in the cell membrane. Its function is as follows. Involved in sporozoite infection of hepatocytes and replication therein. The sequence is that of Sporozoite surface protein P36 (PF36) from Plasmodium falciparum (isolate 3D7).